The following is a 224-amino-acid chain: Germin-like protein 8-4 (224 aa).

Positions 1–23 (MASSSSLYLLAALLALASWQAIA) are cleaved as a signal peptide. Cysteines 33 and 48 form a disulfide. A Cupin type-1 domain is found at 70–213 (STMNKVGSNV…AFQVEKKVID (144 aa)). Residue N78 is glycosylated (N-linked (GlcNAc...) asparagine). H111, H113, E118, and H158 together coordinate Mn(2+).

The protein belongs to the germin family. Oligomer (believed to be a pentamer but probably hexamer).

The protein localises to the secreted. It localises to the extracellular space. It is found in the apoplast. Functionally, plays a role in broad-spectrum disease resistance. Probably has no oxalate oxidase activity even if the active site is conserved. This chain is Germin-like protein 8-4 (GER1), found in Oryza sativa subsp. japonica (Rice).